The chain runs to 486 residues: MPLSKVEHYLSYHTRLLLPHVLSLQSSHRVAYIFSLLSAVSTGFITLISLYSQPWQKHLNYSSWQINTIASMTNLGMYLTPPILGMIADSHGPITLSLLAIIGFIPSYSYLAYVFNHPELSLGGNGDSSFNLSIICFVFIGISTSALYFSALLTCTKLYPHTKLLSISLPTTCYGISSVVGSQLLRIKWFWSSNASSSSSNSDLNLGRVFQTFALVYVVIGLLAWIATSVVSLLHFNEEQDNQKRLDDQTDVEQSPLLERSNHVQEKFTQTMLRIFSDPVTYILAVSILLSLGPLEMFIANMGSLTNLLVQLDAPTLSTKLLSTYALSSTFTRLLTGIVADFFAKKKISIKWILLTFLSLGVCAQLFLLKMTSSASPWGLVPTGSLVGIVYGGLFTVYPTLVLLVWGERSFGTVYGSLLIAPAIGSMIFCMLYAKFYDSRCMSGGGDLRNPSCISAVYKYSSIAFVVSAVLSAVVFWKLKSRKLRI.

Residues 1–29 are Cytoplasmic-facing; that stretch reads MPLSKVEHYLSYHTRLLLPHVLSLQSSHR. The chain crosses the membrane as a helical span at residues 30 to 50; sequence VAYIFSLLSAVSTGFITLISL. Residues 51 to 67 lie on the Vacuolar side of the membrane; that stretch reads YSQPWQKHLNYSSWQIN. Asn60 is a glycosylation site (N-linked (GlcNAc...) asparagine). Residues 68–88 form a helical membrane-spanning segment; the sequence is TIASMTNLGMYLTPPILGMIA. The Cytoplasmic portion of the chain corresponds to 89–93; the sequence is DSHGP. The chain crosses the membrane as a helical span at residues 94-114; sequence ITLSLLAIIGFIPSYSYLAYV. Over 115 to 133 the chain is Vacuolar; it reads FNHPELSLGGNGDSSFNLS. A glycan (N-linked (GlcNAc...) asparagine) is linked at Asn131. A helical membrane pass occupies residues 134–154; it reads IICFVFIGISTSALYFSALLT. Over 155–163 the chain is Cytoplasmic; it reads CTKLYPHTK. The chain crosses the membrane as a helical span at residues 164 to 184; that stretch reads LLSISLPTTCYGISSVVGSQL. The Vacuolar portion of the chain corresponds to 185–212; the sequence is LRIKWFWSSNASSSSSNSDLNLGRVFQT. Asn194 carries N-linked (GlcNAc...) asparagine glycosylation. The chain crosses the membrane as a helical span at residues 213 to 233; the sequence is FALVYVVIGLLAWIATSVVSL. Over 234 to 279 the chain is Cytoplasmic; sequence LHFNEEQDNQKRLDDQTDVEQSPLLERSNHVQEKFTQTMLRIFSDP. Position 255 is a phosphoserine (Ser255). Residues 280 to 300 form a helical membrane-spanning segment; sequence VTYILAVSILLSLGPLEMFIA. Residues 301–320 are Vacuolar-facing; sequence NMGSLTNLLVQLDAPTLSTK. A helical membrane pass occupies residues 321 to 343; sequence LLSTYALSSTFTRLLTGIVADFF. At 344-347 the chain is on the cytoplasmic side; sequence AKKK. Residues 348–368 traverse the membrane as a helical segment; sequence ISIKWILLTFLSLGVCAQLFL. The Vacuolar segment spans residues 369 to 385; that stretch reads LKMTSSASPWGLVPTGS. The chain crosses the membrane as a helical span at residues 386–406; it reads LVGIVYGGLFTVYPTLVLLVW. The Cytoplasmic segment spans residues 407-413; sequence GERSFGT. The chain crosses the membrane as a helical span at residues 414–434; that stretch reads VYGSLLIAPAIGSMIFCMLYA. At 435-456 the chain is on the vacuolar side; that stretch reads KFYDSRCMSGGGDLRNPSCISA. Residues 457 to 477 form a helical membrane-spanning segment; it reads VYKYSSIAFVVSAVLSAVVFW. Residues 478–486 are Cytoplasmic-facing; that stretch reads KLKSRKLRI.

This sequence belongs to the major facilitator superfamily.

Its subcellular location is the vacuole membrane. Probable transporter. Does not act in the transport of monocarboxylic acids across the plasma membrane. This chain is Probable transporter MCH1 (MCH1), found in Saccharomyces cerevisiae (strain ATCC 204508 / S288c) (Baker's yeast).